The primary structure comprises 525 residues: GMP synthase [glutamine-hydrolyzing] (525 aa).

In terms of domain architecture, Glutamine amidotransferase type-1 spans 9–207 (RILILDFGSQ…VRDICECEAL (199 aa)). Cys86 functions as the Nucleophile in the catalytic mechanism. Catalysis depends on residues His181 and Glu183. In terms of domain architecture, GMPS ATP-PPase spans 208–400 (WTPAKIIDDA…LGLPYDMLYR (193 aa)). 235 to 241 (SGGVDSS) is a binding site for ATP.

As to quaternary structure, homodimer.

It catalyses the reaction XMP + L-glutamine + ATP + H2O = GMP + L-glutamate + AMP + diphosphate + 2 H(+). Its pathway is purine metabolism; GMP biosynthesis; GMP from XMP (L-Gln route): step 1/1. Functionally, catalyzes the synthesis of GMP from XMP. This Cronobacter sakazakii (strain ATCC BAA-894) (Enterobacter sakazakii) protein is GMP synthase [glutamine-hydrolyzing].